The chain runs to 116 residues: Large ribosomal subunit protein bL19 (116 aa).

It belongs to the bacterial ribosomal protein bL19 family.

In terms of biological role, this protein is located at the 30S-50S ribosomal subunit interface and may play a role in the structure and function of the aminoacyl-tRNA binding site. The sequence is that of Large ribosomal subunit protein bL19 from Clostridium botulinum (strain Eklund 17B / Type B).